Reading from the N-terminus, the 361-residue chain is N-methyltransferase benX (361 aa).

The protein belongs to the methyltransferase superfamily.

The protein operates within secondary metabolite biosynthesis. Functionally, N-methyltransferase; part of the gene cluster that mediates the biosynthesis of benzomalvin A and D. The pathway begins with the loading of amino acid precursors onto the A domains of the non ribosomal peptide synthetases benY and benZ. BenY and the A1 domain of benZ are loaded with anthranilate (Anth), while the A2 domain of benZ is loaded with phenylalanine (Phe). N-methylation of Phe by the methyltransferase benX may happen before loading of Phe onto benZ, after loading of Phe, or after dipeptide formation. Condensation of Anth with the secondary amine of NmPhe or Phe is catalyzed by the C1 domain of benZ, forming a dipeptide intermediate. This is followed by in trans condensation of the Anth-NmPhe dipeptide with Anth bound to the T domain of benY by the C2 domain of benZ to form the linear tripeptide Anth-NmPhe-Anth. Cyclization and release of the tripeptide is then catalyzed by the C-terminal C domain of benY and the resulting 11-member macrocyclic intermediate is expected to spontaneously collapse to form the benzodiazepine core. Benzomalvin A is in conformational equilibrium with its atropisomer, benzomalvin D. The sequence is that of N-methyltransferase benX from Aspergillus terreus.